A 578-amino-acid chain; its full sequence is Thiol:disulfide interchange protein DsbD (578 aa).

Residues 1–24 (MAQRFITLILLLCSILLAPHSAQA) form the signal peptide. Cystine bridges form between cysteine 134–cysteine 140 and cysteine 195–cysteine 317. The next 9 helical transmembrane spans lie at 183–203 (ALLI…YPLI), 219–239 (ILLL…LLGL), 256–276 (YVLI…FGLY), 297–317 (GGSL…CSPC), 318–338 (TTAP…MLAG), 339–359 (GGTL…VTLF), 370–390 (WMQY…VFLL), 397–417 (VWGL…AFIL), and 421–441 (AHSG…LIAA). In terms of domain architecture, Thioredoxin spans 438 to 578 (LIAARPLQDW…FLQHLQNLPR (141 aa)). A disulfide bridge links cysteine 493 with cysteine 496.

Belongs to the thioredoxin family. DsbD subfamily.

The protein resides in the cell inner membrane. The catalysed reaction is [protein]-dithiol + NAD(+) = [protein]-disulfide + NADH + H(+). The enzyme catalyses [protein]-dithiol + NADP(+) = [protein]-disulfide + NADPH + H(+). Its function is as follows. Required to facilitate the formation of correct disulfide bonds in some periplasmic proteins and for the assembly of the periplasmic c-type cytochromes. Acts by transferring electrons from cytoplasmic thioredoxin to the periplasm. This transfer involves a cascade of disulfide bond formation and reduction steps. This Yersinia enterocolitica serotype O:8 / biotype 1B (strain NCTC 13174 / 8081) protein is Thiol:disulfide interchange protein DsbD.